The following is a 171-amino-acid chain: Endoribonuclease YbeY (171 aa).

Zn(2+) is bound by residues histidine 130, histidine 134, and histidine 140.

This sequence belongs to the endoribonuclease YbeY family. Zn(2+) is required as a cofactor.

The protein localises to the cytoplasm. Its function is as follows. Single strand-specific metallo-endoribonuclease involved in late-stage 70S ribosome quality control and in maturation of the 3' terminus of the 16S rRNA. This is Endoribonuclease YbeY from Neisseria gonorrhoeae (strain ATCC 700825 / FA 1090).